The sequence spans 565 residues: MLKEQFLNAFDHPSRCLFMTLRFRRWFSTTLARLINCNSCGIKLQNENPKTIGYYIKPKKPTVNKLQSLEDVKYLLFSQDLQHVKEQQDVGSLEELNETMESPLICKRCNDALHRNQYDLKEFGRYTITDVLEKIPRGSNILHVVPLPEFPFHFEKSLLEVPHFNTSLLLTKGDQLANDKNTLQRRSLVFFKDFLKYQLGIISNKTVAVSGLKNWNIQSAYAAMNANSYLVGDANVGKSTLINSVMQRYLGYKIHTDRKGQIVTNEPSVKDLKNIKHFFKNQFAGVSHIPNMTRNLQGYRVGDKFIYDLPGFTTNINGAYYEDIIQKDWLERTRKTEKFNTKKLKKQRYISVKGNEKGNCYTVGGIFFWQPPAGTVNQVVSYIPGEGREFADINRGLEVFRACQDDAHPLAKFCGVHPQICQRENYVRHVIPPFQGSIEVVLKDIGYFTIKTTGRYQFKGLHEFWVPRGIDVLVREPLESLISEGSWRHTESKGRVPACPKDRPIVSSTYIVDPEESDLLGKMKEMYLERTSNDISSRRFLYDDPLEVVSKLHEERPNLYWYYRW.

Positions 129 to 315 constitute a CP-type G domain; it reads TDVLEKIPRG…IYDLPGFTTN (187 aa).

Belongs to the TRAFAC class YlqF/YawG GTPase family. GEP3 subfamily.

It localises to the mitochondrion. Functionally, may be involved in the mitochondrial lipid metabolism. This Zygosaccharomyces rouxii (strain ATCC 2623 / CBS 732 / NBRC 1130 / NCYC 568 / NRRL Y-229) protein is Genetic interactor of prohibitins 3, mitochondrial (GEP3).